The chain runs to 207 residues: 2,3-bisphosphoglycerate-dependent phosphoglycerate mutase (207 aa).

Residues Arg-10 to Asn-17, Thr-23 to Gly-24, Arg-62, Glu-89 to Tyr-92, Lys-100, Arg-116 to Arg-117, and Gly-160 to Asn-161 contribute to the substrate site. Catalysis depends on His-11, which acts as the Tele-phosphohistidine intermediate. Glu-89 functions as the Proton donor/acceptor in the catalytic mechanism.

This sequence belongs to the phosphoglycerate mutase family. BPG-dependent PGAM subfamily. Homodimer.

The enzyme catalyses (2R)-2-phosphoglycerate = (2R)-3-phosphoglycerate. The protein operates within carbohydrate degradation; glycolysis; pyruvate from D-glyceraldehyde 3-phosphate: step 3/5. Its function is as follows. Catalyzes the interconversion of 2-phosphoglycerate and 3-phosphoglycerate. This chain is 2,3-bisphosphoglycerate-dependent phosphoglycerate mutase, found in Bradyrhizobium diazoefficiens (strain JCM 10833 / BCRC 13528 / IAM 13628 / NBRC 14792 / USDA 110).